The primary structure comprises 20 residues: Agglutinin beta-3 chain (20 aa).

It belongs to the jacalin lectin family. In terms of assembly, tetramer of four alpha chains associated with two or four beta chains.

Functionally, D-galactose-specific lectin, binds the T-antigen structure Gal-beta1,3-GalNAc (Thomsen-Friedenreich-antigen-specific lectin). Potent and selective stimulant of distinct T- and B-cell functions. Shows a unique ability to specifically recognize IgA-1 from human serum. The protein is Agglutinin beta-3 chain of Artocarpus integer (Jack fruit).